The chain runs to 392 residues: MAAPLRIQSDWAQALRKDEGEAWLSCHPPGKPSLYGSLTCQGIGLDGIPEVTASEGFTVNEINKKSIHISCPKENASSKFLAPYTTFSRIHTKSITCLDISSRGGLGVSSSTDGTMKIWQASNGELRRVLEGHVFDVNCCRFFPSGLVVLSGGMDAQLKIWSAEDASCVVTFKGHKGGILDTAIVDRGRNVVSASRDGTARLWDCGRSACLGVLADCGSSINGVAVGAADNSINLGSPEQMPSEREVGTEAKMLLLAREDKKLQCLGLQSRQLVFLFIGSDAFNCCTFLSGFLLLAGTQDGNIYQLDVRSPRAPVQVIHRSGAPVLSLLSVRDGFIASQGDGSCFIVQQDLDYVTELTGADCDPVYKVATWEKQIYTCCRDGLVRRYQLSDL.

N-acetylalanine is present on alanine 2. 7 WD repeats span residues 82–121 (APYT…IWQA), 125–163 (ELRR…IWSA), 167–205 (SCVV…LWDC), 209–259 (ACLG…LARE), 270–308 (SRQL…QLDV), 313–349 (APVQ…IVQQ), and 353–389 (YVTE…RYQL).

Belongs to the WD repeat PAAF1/RPN14 family. In terms of assembly, interacts with PSMC1, PSMC2, PSMC3, PSMC4, PSMC5 and PSMC6. Interacts with SUPT6H. As to quaternary structure, (Microbial infection) Interacts with HIV-1 Tat. Ubiquitously expressed, with highest levels in kidney, brain and testis.

Functionally, inhibits proteasome 26S assembly and proteolytic activity by impairing the association of the 19S regulatory complex with the 20S core. In case of HIV-1 infection, recruited by viral Tat to the HIV-1 promoter, where it promotes the recruitment of 19S regulatory complex through dissociation of the proteasome 26S. This presumably promotes provirus transcription efficiency. Protects SUPT6H from proteasomal degradation. The sequence is that of Proteasomal ATPase-associated factor 1 (PAAF1) from Homo sapiens (Human).